A 67-amino-acid polypeptide reads, in one-letter code: Putative antitoxin PF1308 (67 aa).

The protein belongs to the UPF0165 family.

Its function is as follows. Possibly the antitoxin component of a type II toxin-antitoxin (TA) system. The polypeptide is Putative antitoxin PF1308 (Pyrococcus furiosus (strain ATCC 43587 / DSM 3638 / JCM 8422 / Vc1)).